Consider the following 297-residue polypeptide: MTSYDDKLDASLDLMRRLDPKNITKNLNDICTLIQNDGSETSEELTQDLLSSVDVPLRTQKCDETGKEYLCCDYNRDGDSYRSPWSNKYFPVVAQDSDELPPPFPSNILRELEVKANDSFDIYRDLYYEGAGTSSVYFWDTNEEDDEQETLDNGFAGVVLFKKETEDGSGKWDSIHVIEVIPEASSNATYKVTSSVILDLQNKKSSSLSLAGSLTRQLELTQSLSLDSALNVETAHLINLGTLIEKSEYNLRNLLQDVYFDKLRDIVMKDLRSVGDLSGKESDDKRQSELVKGLQSL.

Residues 276–289 (DLSGKESDDKRQSE) show a composition bias toward basic and acidic residues. The tract at residues 276–297 (DLSGKESDDKRQSELVKGLQSL) is disordered.

The protein belongs to the F-actin-capping protein beta subunit family. In terms of assembly, component of the F-actin capping complex, composed of a heterodimer of an alpha and a beta subunit.

Its subcellular location is the cytoplasm. It localises to the cytoskeleton. The protein resides in the actin patch. F-actin-capping proteins bind in a Ca(2+)-independent manner to the fast growing ends of actin filaments (barbed end) thereby blocking the exchange of subunits at these ends. Unlike other capping proteins (such as gelsolin and severin), these proteins do not sever actin filaments. The chain is F-actin-capping protein subunit beta (CAP2) from Debaryomyces hansenii (strain ATCC 36239 / CBS 767 / BCRC 21394 / JCM 1990 / NBRC 0083 / IGC 2968) (Yeast).